The primary structure comprises 395 residues: S-adenosylmethionine synthase (395 aa).

An ATP-binding site is contributed by His-16. A Mg(2+)-binding site is contributed by Asp-18. K(+) is bound at residue Glu-44. Positions 57 and 100 each coordinate L-methionine. The flexible loop stretch occupies residues 100 to 110 (QSPDIAQGVDR). ATP is bound by residues 167-169 (DAK), 233-234 (RF), Asp-242, 248-249 (RK), Ala-265, and Lys-269. Residue Asp-242 coordinates L-methionine. Position 273 (Lys-273) interacts with L-methionine.

The protein belongs to the AdoMet synthase family. In terms of assembly, homotetramer; dimer of dimers. Mg(2+) serves as cofactor. Requires K(+) as cofactor.

It is found in the cytoplasm. It catalyses the reaction L-methionine + ATP + H2O = S-adenosyl-L-methionine + phosphate + diphosphate. It participates in amino-acid biosynthesis; S-adenosyl-L-methionine biosynthesis; S-adenosyl-L-methionine from L-methionine: step 1/1. Its function is as follows. Catalyzes the formation of S-adenosylmethionine (AdoMet) from methionine and ATP. The overall synthetic reaction is composed of two sequential steps, AdoMet formation and the subsequent tripolyphosphate hydrolysis which occurs prior to release of AdoMet from the enzyme. In Burkholderia vietnamiensis (strain G4 / LMG 22486) (Burkholderia cepacia (strain R1808)), this protein is S-adenosylmethionine synthase.